Consider the following 296-residue polypeptide: MSFFHASQRDALNQSLAEVQGQINVSFEFFPPRTSEMEQTLWNSIDRLSSLKPKFVSVTYGANSGERDRTHSIIKGIKDRTGLEAAPHLTCIDATPDELRTIARDYWNNGIRHIVALRGDLPPGSGKPEMYASDLVTLLKEVADFDISVAAYPEVHPEAKSAQADLLNLKRKVDAGANRAITQFFFDVESYLRFRDRCVSAGIDVEIIPGILPVSNFKQAKKFADMTNVRIPAWMAQMFDGLDDDAETRKLVGANIAMDMVKILSREGVKDFHFYTLNRAEMSYAICHTLGVRPGL.

Residue E28 is the Proton donor/acceptor of the active site. T59 provides a ligand contact to NADH. Residues Y60, A62, H88, R118, G119, D120, A132, Y152, H156, A159, D165, N168, R171, and K172 each coordinate FAD. Residue D120 coordinates (6S)-5-methyl-5,6,7,8-tetrahydrofolate. Residue Q183 participates in NADH binding. 3 residues coordinate (6S)-5-methyl-5,6,7,8-tetrahydrofolate: Q183, Q219, and R279.

It belongs to the methylenetetrahydrofolate reductase family. In terms of assembly, homotetramer. FAD serves as cofactor.

The catalysed reaction is (6S)-5-methyl-5,6,7,8-tetrahydrofolate + NAD(+) = (6R)-5,10-methylene-5,6,7,8-tetrahydrofolate + NADH + H(+). It functions in the pathway one-carbon metabolism; tetrahydrofolate interconversion. It participates in amino-acid biosynthesis; L-methionine biosynthesis via de novo pathway. Its function is as follows. Catalyzes the NADH-dependent reduction of 5,10-methylenetetrahydrofolate to 5-methyltetrahydrofolate. Is required to provide the methyl group necessary for methionine synthetase to convert homocysteine to methionine; the methyl group is given by 5-methyltetrahydrofolate. Can also use NADPH as the reductant, but much less effectively than NADH. The chain is 5,10-methylenetetrahydrofolate reductase from Escherichia coli (strain K12).